A 778-amino-acid chain; its full sequence is Probable glutamine--tRNA ligase (778 aa).

A compositionally biased stretch (basic and acidic residues) spans 188-205; it reads LKPQTKANDKPKAAKPKA. The segment at 188–219 is disordered; it reads LKPQTKANDKPKAAKPKAEVTPAAQTAEAASD. Residues 273–283 carry the 'HIGH' region motif; it reads PEPNGILHIGH. ATP is bound by residues 274-276 and 280-286; these read EPN and HIGHAKA. The L-glutamine site is built by Asp306 and Tyr441. ATP is bound by residues Thr460, 489–490, and 497–499; these read RL and VSK. Positions 496–500 match the 'KMSKS' region motif; that stretch reads LVSKR.

This sequence belongs to the class-I aminoacyl-tRNA synthetase family.

It catalyses the reaction tRNA(Gln) + L-glutamine + ATP = L-glutaminyl-tRNA(Gln) + AMP + diphosphate. The polypeptide is Probable glutamine--tRNA ligase (Drosophila melanogaster (Fruit fly)).